Here is a 205-residue protein sequence, read N- to C-terminus: ATP-dependent Clp protease proteolytic subunit (205 aa).

S109 (nucleophile) is an active-site residue. The active site involves H134.

This sequence belongs to the peptidase S14 family. In terms of assembly, fourteen ClpP subunits assemble into 2 heptameric rings which stack back to back to give a disk-like structure with a central cavity, resembling the structure of eukaryotic proteasomes.

Its subcellular location is the cytoplasm. The catalysed reaction is Hydrolysis of proteins to small peptides in the presence of ATP and magnesium. alpha-casein is the usual test substrate. In the absence of ATP, only oligopeptides shorter than five residues are hydrolyzed (such as succinyl-Leu-Tyr-|-NHMec, and Leu-Tyr-Leu-|-Tyr-Trp, in which cleavage of the -Tyr-|-Leu- and -Tyr-|-Trp bonds also occurs).. In terms of biological role, cleaves peptides in various proteins in a process that requires ATP hydrolysis. Has a chymotrypsin-like activity. Plays a major role in the degradation of misfolded proteins. This Buchnera aphidicola subsp. Baizongia pistaciae (strain Bp) protein is ATP-dependent Clp protease proteolytic subunit.